The chain runs to 583 residues: Inactive carboxylesterase-like protein VdtD (583 aa).

A signal peptide spans 1–23 (MFMTQIVFGIAPTLLKTFSHLTA). Residues N84, N109, N221, N265, N307, N350, N388, N448, and N468 are each glycosylated (N-linked (GlcNAc...) asparagine).

This sequence belongs to the type-B carboxylesterase/lipase family.

The protein operates within secondary metabolite biosynthesis. In terms of biological role, inactive carboxylesterase-like protein; part of the gene cluster that mediates the biosynthesis of viriditoxin, one of the 'classical' secondary metabolites produced by fungi and that has antibacterial activity. The first step is performed by the polyketide synthase VdtA which condenses one acetyl-CoA and 6 malonyl-CoA units to form the heptaketide monomer backbone of viriditoxin. The product of VdtA is then O-methylated on C7 by the O-methyltransferase VdtC. The O-methyl group is important for the stereoselective coupling of the monomers at the final step of viriditoxin biosynthesis. The short-chain dehydrogenase/reductase VdtF then acts as a stereospecific reductase converting the pyrone to dihydropyrone via the reduction of the C3-C4 double bond. The FAD-binding monooxygenase VdtE then converts the ketone group into a methyl-ester group to yield semi-viriditoxin. Finally, the laccase VdtB is involved in dimerization of 2 semi-viriditoxin molecules to yield the final viriditoxin. VdtB is responsible for the regioselective 6,6'-coupling of semi-viriditoxin, which yields (M)-viriditoxin and (P)-viriditoxin at a ratio of 1:2. The non-catalytic carboxylesterase-like protein VdtD affects the stereochemistical outcome of the coupling. The highly reducing polyketide synthase VdtX is not involved in viriditoxin synthesis, but might possibly play a role in the production of additional metabolites not identified yet. This chain is Inactive carboxylesterase-like protein VdtD, found in Byssochlamys spectabilis (Paecilomyces variotii).